A 61-amino-acid chain; its full sequence is MAELKITQVRSTIGARWKQRESLRTLGLRKIRQSVVREDNAQTRGLIKTVHHLVEVEEVKA.

It belongs to the universal ribosomal protein uL30 family. In terms of assembly, part of the 50S ribosomal subunit.

The polypeptide is Large ribosomal subunit protein uL30 (Mycolicibacterium gilvum (strain PYR-GCK) (Mycobacterium gilvum (strain PYR-GCK))).